The following is a 286-amino-acid chain: Probable transport system permease protein NifC (286 aa).

Transmembrane regions (helical) follow at residues 34–54 (LFLALTAIYFVMLIFPIISMI), 75–95 (IILSFVTSLIALIFTFIIGTP), 114–134 (IFVEIPVVLPPAVAGIALLLA), 152–172 (VIFTSTAVIIAQFFVSSALYV), 216–236 (GLILAWIRSLGEFGATLMFAG), and 257–277 (IKMATAFATILYIMTFVLLLL). In terms of domain architecture, ABC transmembrane type-1 spans 75–278 (IILSFVTSLI…IMTFVLLLLV (204 aa)).

It belongs to the binding-protein-dependent transport system permease family. CysTW subfamily.

It localises to the cell membrane. May be involved in molybdenum transport. This chain is Probable transport system permease protein NifC (nifC), found in Clostridium pasteurianum.